The sequence spans 386 residues: Patatin group M-1 (386 aa).

Residues Met1–Ala23 form the signal peptide. The 198-residue stretch at Leu32 to Leu229 folds into the PNPLA domain. Residues Gly36–Gly41 carry the GXGXXG motif. Positions Gly75 to Gly79 match the GXSXG motif. Ser77 (nucleophile) is an active-site residue. N-linked (GlcNAc...) asparagine glycosylation occurs at Asn115. Asp215 acts as the Proton acceptor in catalysis. Positions Asp215 to Gly217 match the DGA/G motif.

This sequence belongs to the patatin family. As to expression, tuber.

It is found in the vacuole. In terms of biological role, probable lipolytic acyl hydrolase (LAH), an activity which is thought to be involved in the response of tubers to pathogens. This chain is Patatin group M-1, found in Solanum tuberosum (Potato).